Reading from the N-terminus, the 274-residue chain is 2,3,4,5-tetrahydropyridine-2,6-dicarboxylate N-succinyltransferase (274 aa).

Substrate is bound by residues Arg-104 and Asp-141.

This sequence belongs to the transferase hexapeptide repeat family. Homotrimer.

Its subcellular location is the cytoplasm. The enzyme catalyses (S)-2,3,4,5-tetrahydrodipicolinate + succinyl-CoA + H2O = (S)-2-succinylamino-6-oxoheptanedioate + CoA. The protein operates within amino-acid biosynthesis; L-lysine biosynthesis via DAP pathway; LL-2,6-diaminopimelate from (S)-tetrahydrodipicolinate (succinylase route): step 1/3. This chain is 2,3,4,5-tetrahydropyridine-2,6-dicarboxylate N-succinyltransferase, found in Shewanella denitrificans (strain OS217 / ATCC BAA-1090 / DSM 15013).